The primary structure comprises 87 residues: U3-theraphotoxin-Hhn1i (87 aa).

A signal peptide spans 1-24 (MVNMEASMFLTFAGLVLLFVVCYA). Positions 25 to 52 (SESEEKEFPKEMLSSIFAVDNDFKQEER) are excised as a propeptide. Cystine bridges form between Cys-54/Cys-67, Cys-61/Cys-72, and Cys-66/Cys-79.

The protein belongs to the neurotoxin 10 (Hwtx-1) family. 51 (Hntx-8) subfamily. Hntx-8 sub-subfamily. In terms of tissue distribution, expressed by the venom gland.

Its subcellular location is the secreted. In terms of biological role, ion channel inhibitor. This Cyriopagopus hainanus (Chinese bird spider) protein is U3-theraphotoxin-Hhn1i.